A 347-amino-acid chain; its full sequence is uncharacterized protein (347 aa).

5 disordered regions span residues 1–40, 72–92, 133–158, 173–209, and 306–347; these read MAQELAAPLSCGQPPGQNITETTTDPWDEGDLRFEPSNSM, SCEDSSSEGPSMHFVPPIQGS, SDSTTNCDLSGDNKDKHPKEKTQLTL, ENQKDDKDDDSVFPESAQEEDSQLPSSSLPGMAQVSH, and EDPR…PPDF. The segment covering 15-25 has biased composition (polar residues); it reads PGQNITETTTD. Residues 143–154 show a composition bias toward basic and acidic residues; that stretch reads GDNKDKHPKEKT. Acidic residues predominate over residues 179–194; it reads KDDDSVFPESAQEEDS. Residues 195-209 show a composition bias toward polar residues; that stretch reads QLPSSSLPGMAQVSH. Residues 306 to 318 show a composition bias toward basic and acidic residues; sequence EDPREANERPREL. Basic residues predominate over residues 319–330; that stretch reads ARKKRFSYRSKR.

This is an uncharacterized protein from Bos taurus (Bovine).